Consider the following 556-residue polypeptide: Glutamine--tRNA ligase (556 aa).

Positions 33–43 (PEPNGYLHIGH) match the 'HIGH' region motif. ATP-binding positions include 34 to 36 (EPN) and 40 to 46 (HIGHAKS). L-glutamine is bound by residues Asp66 and Tyr210. ATP-binding positions include Thr229, 259–260 (RL), and 267–269 (MSK). The 'KMSKS' region signature appears at 266–270 (VMSKR).

It belongs to the class-I aminoacyl-tRNA synthetase family. In terms of assembly, monomer.

It localises to the cytoplasm. It catalyses the reaction tRNA(Gln) + L-glutamine + ATP = L-glutaminyl-tRNA(Gln) + AMP + diphosphate. This Clostridium kluyveri (strain ATCC 8527 / DSM 555 / NBRC 12016 / NCIMB 10680 / K1) protein is Glutamine--tRNA ligase.